The primary structure comprises 591 residues: Formate--tetrahydrofolate ligase (591 aa).

74-81 (TPLGEGKS) lines the ATP pocket.

It belongs to the formate--tetrahydrofolate ligase family.

The enzyme catalyses (6S)-5,6,7,8-tetrahydrofolate + formate + ATP = (6R)-10-formyltetrahydrofolate + ADP + phosphate. Its pathway is one-carbon metabolism; tetrahydrofolate interconversion. This is Formate--tetrahydrofolate ligase from Desulforapulum autotrophicum (strain ATCC 43914 / DSM 3382 / VKM B-1955 / HRM2) (Desulfobacterium autotrophicum).